The following is a 59-amino-acid chain: Temporin-HN2 (59 aa).

An N-terminal signal peptide occupies residues 1-22; the sequence is MFTLKKSLLLLLFLGTINLSLS. The stretch at 16–44 forms a coiled coil; the sequence is TINLSLSEQERDAKEERRDEMDVEVEKRN. A propeptide spanning residues 23–41 is cleaved from the precursor; that stretch reads EQERDAKEERRDEMDVEVE. At L57 the chain carries Leucine amide.

Expressed by the skin glands.

The protein resides in the secreted. In terms of biological role, has antimicrobial activity against some Gram-positive bacteria and fungi but has no activity against a range of Gram-negative bacteria except P.faecalis. Active against the Gram-positive bacteria S.aureus ATCC 25923 (MIC=4.8 uM), S.carnosus KHS (MIC=19 uM), B.licheniformis X39 (MIC=19 uM) and R.rhodochrous X15 (MIC=2.4 uM) but is inactive against E.faecium 091299 and E.faecalis 981. Has a less potent antimicrobial activity against the Gram-negative bacterium P.faecalis X29 (MIC=37.5 uM) and is inactive against E.coli, P.aeruginosa and S.typhi. Has antifungal activity against C.albicans ATCC 2002 (MIC=9.5 uM) and is also active against the slime mold 090223 (MIC=9.5 uM). Has extremely low hemolytic activity against human erythrocytes (LC(50)=300 uM). In Odorrana hainanensis (Odor frog), this protein is Temporin-HN2.